The sequence spans 165 residues: uncharacterized protein (165 aa).

Residues 53-123 (CSEKTGSAPN…PAPSSGRQGG (71 aa)) form a disordered region. Low complexity predominate over residues 58–71 (GSAPNPGSSAPAPA).

This is an uncharacterized protein from Treponema pallidum (strain Nichols).